The chain runs to 467 residues: Methylenetetrahydrofolate--tRNA-(uracil-5-)-methyltransferase TrmFO (467 aa).

An FAD-binding site is contributed by 11 to 16; sequence GAGLAG.

The protein belongs to the MnmG family. TrmFO subfamily. Requires FAD as cofactor.

The protein resides in the cytoplasm. The enzyme catalyses uridine(54) in tRNA + (6R)-5,10-methylene-5,6,7,8-tetrahydrofolate + NADH + H(+) = 5-methyluridine(54) in tRNA + (6S)-5,6,7,8-tetrahydrofolate + NAD(+). It catalyses the reaction uridine(54) in tRNA + (6R)-5,10-methylene-5,6,7,8-tetrahydrofolate + NADPH + H(+) = 5-methyluridine(54) in tRNA + (6S)-5,6,7,8-tetrahydrofolate + NADP(+). Functionally, catalyzes the folate-dependent formation of 5-methyl-uridine at position 54 (M-5-U54) in all tRNAs. In Prochlorococcus marinus (strain NATL1A), this protein is Methylenetetrahydrofolate--tRNA-(uracil-5-)-methyltransferase TrmFO.